A 571-amino-acid chain; its full sequence is Proline--tRNA ligase (571 aa).

The protein belongs to the class-II aminoacyl-tRNA synthetase family. ProS type 1 subfamily. Homodimer.

The protein resides in the cytoplasm. The enzyme catalyses tRNA(Pro) + L-proline + ATP = L-prolyl-tRNA(Pro) + AMP + diphosphate. In terms of biological role, catalyzes the attachment of proline to tRNA(Pro) in a two-step reaction: proline is first activated by ATP to form Pro-AMP and then transferred to the acceptor end of tRNA(Pro). As ProRS can inadvertently accommodate and process non-cognate amino acids such as alanine and cysteine, to avoid such errors it has two additional distinct editing activities against alanine. One activity is designated as 'pretransfer' editing and involves the tRNA(Pro)-independent hydrolysis of activated Ala-AMP. The other activity is designated 'posttransfer' editing and involves deacylation of mischarged Ala-tRNA(Pro). The misacylated Cys-tRNA(Pro) is not edited by ProRS. This is Proline--tRNA ligase from Histophilus somni (strain 129Pt) (Haemophilus somnus).